Here is a 212-residue protein sequence, read N- to C-terminus: ATP phosphoribosyltransferase (212 aa).

It belongs to the ATP phosphoribosyltransferase family. Short subfamily. As to quaternary structure, heteromultimer composed of HisG and HisZ subunits.

It is found in the cytoplasm. The enzyme catalyses 1-(5-phospho-beta-D-ribosyl)-ATP + diphosphate = 5-phospho-alpha-D-ribose 1-diphosphate + ATP. It functions in the pathway amino-acid biosynthesis; L-histidine biosynthesis; L-histidine from 5-phospho-alpha-D-ribose 1-diphosphate: step 1/9. Catalyzes the condensation of ATP and 5-phosphoribose 1-diphosphate to form N'-(5'-phosphoribosyl)-ATP (PR-ATP). Has a crucial role in the pathway because the rate of histidine biosynthesis seems to be controlled primarily by regulation of HisG enzymatic activity. This Clostridium novyi (strain NT) protein is ATP phosphoribosyltransferase.